Consider the following 510-residue polypeptide: 2,3-bisphosphoglycerate-independent phosphoglycerate mutase (510 aa).

Residues aspartate 13 and serine 63 each coordinate Mn(2+). Serine 63 acts as the Phosphoserine intermediate in catalysis. Residues histidine 124, arginine 154–aspartate 155, arginine 186, arginine 192, arginine 262–arginine 265, and lysine 334 each bind substrate. 5 residues coordinate Mn(2+): aspartate 401, histidine 405, aspartate 442, histidine 443, and histidine 461.

The protein belongs to the BPG-independent phosphoglycerate mutase family. In terms of assembly, monomer. Requires Mn(2+) as cofactor.

It catalyses the reaction (2R)-2-phosphoglycerate = (2R)-3-phosphoglycerate. The protein operates within carbohydrate degradation; glycolysis; pyruvate from D-glyceraldehyde 3-phosphate: step 3/5. Functionally, catalyzes the interconversion of 2-phosphoglycerate and 3-phosphoglycerate. The polypeptide is 2,3-bisphosphoglycerate-independent phosphoglycerate mutase (Vibrio parahaemolyticus serotype O3:K6 (strain RIMD 2210633)).